The sequence spans 194 residues: Thymidine kinase (194 aa).

ATP is bound by residues 15–22 (GCMFSGKT) and 88–91 (DELH). Glu89 (proton acceptor) is an active-site residue. Residues Cys148, Cys151, Cys186, and Cys189 each coordinate Zn(2+).

The protein belongs to the thymidine kinase family. In terms of assembly, homotetramer.

It is found in the cytoplasm. It carries out the reaction thymidine + ATP = dTMP + ADP + H(+). The sequence is that of Thymidine kinase from Roseiflexus castenholzii (strain DSM 13941 / HLO8).